A 179-amino-acid chain; its full sequence is Large ribosomal subunit protein uL5 (179 aa).

The protein belongs to the universal ribosomal protein uL5 family. As to quaternary structure, part of the 50S ribosomal subunit; part of the 5S rRNA/L5/L18/L25 subcomplex. Contacts the 5S rRNA and the P site tRNA. Forms a bridge to the 30S subunit in the 70S ribosome.

Its function is as follows. This is one of the proteins that bind and probably mediate the attachment of the 5S RNA into the large ribosomal subunit, where it forms part of the central protuberance. In the 70S ribosome it contacts protein S13 of the 30S subunit (bridge B1b), connecting the 2 subunits; this bridge is implicated in subunit movement. Contacts the P site tRNA; the 5S rRNA and some of its associated proteins might help stabilize positioning of ribosome-bound tRNAs. In Geobacillus thermodenitrificans (strain NG80-2), this protein is Large ribosomal subunit protein uL5.